We begin with the raw amino-acid sequence, 669 residues long: Pre-mRNA-processing factor 39 (669 aa).

Residues 1–10 (MQNSHMDEYR) are compositionally biased toward basic and acidic residues. The disordered stretch occupies residues 1–23 (MQNSHMDEYRNSSNGSTGNSSEV). Low complexity predominate over residues 11–23 (NSSNGSTGNSSEV). Residue Ser-44 is modified to Phosphoserine. HAT repeat units follow at residues 109–141 (NHLM…LEKR), 143–175 (DNIK…FLKE), 183–218 (ETNN…WENE), 220–253 (GNLR…HVQN), 333–365 (TFEE…FEIE), 367–399 (GTHE…YMEN), and 404–436 (GVRH…QQGN). Over residues 599–624 (KEQDSLKRKAENGSEEPEEKKAHTED) the composition is skewed to basic and acidic residues. Residues 599 to 634 (KEQDSLKRKAENGSEEPEEKKAHTEDTTSSSTQMID) are disordered. Residues 625–634 (TTSSSTQMID) are compositionally biased toward polar residues.

It belongs to the PRP39 family.

It localises to the nucleus. Its function is as follows. Involved in pre-mRNA splicing. The polypeptide is Pre-mRNA-processing factor 39 (PRPF39) (Homo sapiens (Human)).